The primary structure comprises 463 residues: MEQALSIVVLAAGKGTRMRSRYPKLLHPVGGRPMLDHVLRTAFSLEPEAVHVVHGHGAEAVQAAHADWPVRWVVQEPQLGTGHAVEQAIPAIPDDHQVLVLYGDVPLVRPETLQALLAEADGGLGLLSVDFPDPTGYGRVLRDGHGAVTGVVEHKDATAAQRRVTECNTGLLAAPAGRLKAWLQRLDNDNAQAEYYLTDVIAMAVADGVRVAAYPVADPAEVQGVNDRVQLAAAERVWQRRQAEDWMRAGVTILDPDRFDLRGHFAAGEDCRIDVGVVLEGRVELGAGVEIGPHCVLRDVALGDGTRVEAHSVLDGATAGRNCRIGPFARLRPGTDLADGAKVGNFVETKAARIGPGSKVNHLSYMGDAELGRDVNVGAGTITCNYDGHSKHRTEIGDGAFIGSGTQLVAPVRVGRGATIGAGSTVTRDAPDEALTVARSAQRSIHGWRRPGQRPDRGEGSDA.

The pyrophosphorylase stretch occupies residues 1 to 228; the sequence is MEQALSIVVL…PAEVQGVNDR (228 aa). Residues 10–13, K24, Q75, 80–81, 102–104, G138, E153, N168, and N226 contribute to the UDP-N-acetyl-alpha-D-glucosamine site; these read LAAG, GT, and YGD. Mg(2+) is bound at residue D104. Mg(2+) is bound at residue N226. The tract at residues 229 to 249 is linker; that stretch reads VQLAAAERVWQRRQAEDWMRA. An N-acetyltransferase region spans residues 250–463; the sequence is GVTILDPDRF…RPDRGEGSDA (214 aa). R332 and K350 together coordinate UDP-N-acetyl-alpha-D-glucosamine. H362 acts as the Proton acceptor in catalysis. UDP-N-acetyl-alpha-D-glucosamine contacts are provided by Y365 and N376. Acetyl-CoA contacts are provided by residues A379, 385 to 386, S404, A422, and R439; that span reads NY. Residues 437-463 form a disordered region; sequence VARSAQRSIHGWRRPGQRPDRGEGSDA. Over residues 453–463 the composition is skewed to basic and acidic residues; the sequence is QRPDRGEGSDA.

It in the N-terminal section; belongs to the N-acetylglucosamine-1-phosphate uridyltransferase family. In the C-terminal section; belongs to the transferase hexapeptide repeat family. In terms of assembly, homotrimer. It depends on Mg(2+) as a cofactor.

It localises to the cytoplasm. The enzyme catalyses alpha-D-glucosamine 1-phosphate + acetyl-CoA = N-acetyl-alpha-D-glucosamine 1-phosphate + CoA + H(+). It catalyses the reaction N-acetyl-alpha-D-glucosamine 1-phosphate + UTP + H(+) = UDP-N-acetyl-alpha-D-glucosamine + diphosphate. Its pathway is nucleotide-sugar biosynthesis; UDP-N-acetyl-alpha-D-glucosamine biosynthesis; N-acetyl-alpha-D-glucosamine 1-phosphate from alpha-D-glucosamine 6-phosphate (route II): step 2/2. It functions in the pathway nucleotide-sugar biosynthesis; UDP-N-acetyl-alpha-D-glucosamine biosynthesis; UDP-N-acetyl-alpha-D-glucosamine from N-acetyl-alpha-D-glucosamine 1-phosphate: step 1/1. It participates in bacterial outer membrane biogenesis; LPS lipid A biosynthesis. Its function is as follows. Catalyzes the last two sequential reactions in the de novo biosynthetic pathway for UDP-N-acetylglucosamine (UDP-GlcNAc). The C-terminal domain catalyzes the transfer of acetyl group from acetyl coenzyme A to glucosamine-1-phosphate (GlcN-1-P) to produce N-acetylglucosamine-1-phosphate (GlcNAc-1-P), which is converted into UDP-GlcNAc by the transfer of uridine 5-monophosphate (from uridine 5-triphosphate), a reaction catalyzed by the N-terminal domain. In Alkalilimnicola ehrlichii (strain ATCC BAA-1101 / DSM 17681 / MLHE-1), this protein is Bifunctional protein GlmU.